We begin with the raw amino-acid sequence, 931 residues long: Beta-mannosidase A (931 aa).

An N-terminal signal peptide occupies residues 1-21 (MRHSIGLAAALLAPTLPVALG). N-linked (GlcNAc...) asparagine glycosylation is found at N40, N79, N247, N282, N316, N326, and N347. Residue E479 is the Proton donor of the active site. N-linked (GlcNAc...) asparagine glycosylation is found at N550, N608, N658, N738, N790, N798, N830, and N918.

It belongs to the glycosyl hydrolase 2 family. Beta-mannosidase A subfamily. As to quaternary structure, homodimer.

It localises to the secreted. It carries out the reaction Hydrolysis of terminal, non-reducing beta-D-mannose residues in beta-D-mannosides.. It participates in glycan metabolism; N-glycan degradation. In terms of biological role, exoglycosidase that cleaves the single beta-linked mannose residue from the non-reducing end of beta-mannosidic oligosaccharides of various complexity and length. Involved in the degradation of polymeric mannan and galactomannan. The chain is Beta-mannosidase A (mndA) from Aspergillus niger (strain ATCC MYA-4892 / CBS 513.88 / FGSC A1513).